Reading from the N-terminus, the 198-residue chain is CASP-like protein 4B3 (198 aa).

Residues 1-27 (MSSSGPPAGDGRDDASGPGPAGAAAAA) form a disordered region. The Cytoplasmic portion of the chain corresponds to 1 to 51 (MSSSGPPAGDGRDDASGPGPAGAAAAADGSVPVSRSIVERWKMEPAAARAR). Over residues 16 to 27 (SGPGPAGAAAAA) the composition is skewed to low complexity. The chain crosses the membrane as a helical span at residues 52–72 (LLLRAVAWLFSLLALVVMASN). The Extracellular portion of the chain corresponds to 73-85 (KHGHGGAQDFDNY). The chain crosses the membrane as a helical span at residues 86 to 106 (PEYTYCLGISIIAVLYTTAQV). Residues 107–124 (TRDVHRLSWGRDVIAGRK) are Cytoplasmic-facing. Residues 125 to 145 (AAAVVDFAGDQVVAYLLMSAL) traverse the membrane as a helical segment. Topologically, residues 146–166 (SAAAPVTDYMRQAADNLFTDS) are extracellular. Residues 167–187 (AAAAISMAFLAFLAAGLSALV) form a helical membrane-spanning segment. The Cytoplasmic segment spans residues 188 to 198 (SGYNLAMEVLV).

This sequence belongs to the Casparian strip membrane proteins (CASP) family. In terms of assembly, homodimer and heterodimers.

Its subcellular location is the cell membrane. In Oryza sativa subsp. japonica (Rice), this protein is CASP-like protein 4B3.